The sequence spans 359 residues: Protein RecA (359 aa).

Glycine 69 to threonine 76 is a binding site for ATP. The tract at residues serine 337–glutamate 359 is disordered. Residues glutamate 346 to glutamate 359 are compositionally biased toward acidic residues.

Belongs to the RecA family.

It is found in the cytoplasm. Its function is as follows. Can catalyze the hydrolysis of ATP in the presence of single-stranded DNA, the ATP-dependent uptake of single-stranded DNA by duplex DNA, and the ATP-dependent hybridization of homologous single-stranded DNAs. It interacts with LexA causing its activation and leading to its autocatalytic cleavage. In Nostoc punctiforme (strain ATCC 29133 / PCC 73102), this protein is Protein RecA.